Consider the following 86-residue polypeptide: U15-lycotoxin-Ls1d (86 aa).

The signal sequence occupies residues 1-20 (MNSKIFAVLLLLGLLSCVLS). The region spanning 21–66 (DQYCPKSSITACKKMNIRNDCCKDDDCTGGSWCCATPCGNFCKYPT) is the WAP domain. 5 disulfides stabilise this stretch: C24/C54, C32/C58, C41/C53, C42/C80, and C47/C62.

Belongs to the venom protein 11 family. 01 (wap-1) subfamily. In terms of processing, contains 5 disulfide bonds. In terms of tissue distribution, expressed by the venom gland.

The protein localises to the secreted. Its function is as follows. Has antibacterial activity. This Lycosa singoriensis (Wolf spider) protein is U15-lycotoxin-Ls1d.